A 456-amino-acid chain; its full sequence is Probable glycine dehydrogenase (decarboxylating) subunit 1 (456 aa).

Belongs to the GcvP family. N-terminal subunit subfamily. The glycine cleavage system is composed of four proteins: P, T, L and H. In this organism, the P 'protein' is a heterodimer of two subunits.

It catalyses the reaction N(6)-[(R)-lipoyl]-L-lysyl-[glycine-cleavage complex H protein] + glycine + H(+) = N(6)-[(R)-S(8)-aminomethyldihydrolipoyl]-L-lysyl-[glycine-cleavage complex H protein] + CO2. In terms of biological role, the glycine cleavage system catalyzes the degradation of glycine. The P protein binds the alpha-amino group of glycine through its pyridoxal phosphate cofactor; CO(2) is released and the remaining methylamine moiety is then transferred to the lipoamide cofactor of the H protein. The polypeptide is Probable glycine dehydrogenase (decarboxylating) subunit 1 (Legionella pneumophila (strain Paris)).